Reading from the N-terminus, the 587-residue chain is tRNA (guanine(37)-N(1))-methyltransferase 2 (587 aa).

S-adenosyl-L-methionine contacts are provided by residues R360 and 430-431 (DA). Residues 446-469 (ASTRSRKEDVTNKDGNHVTPTEPM) form a disordered region. The span at 450 to 461 (SRKEDVTNKDGN) shows a compositional bias: basic and acidic residues. N478 lines the S-adenosyl-L-methionine pocket.

This sequence belongs to the class I-like SAM-binding methyltransferase superfamily. TRM5/TYW2 family. Monomer.

It localises to the mitochondrion matrix. The protein localises to the nucleus. The protein resides in the cytoplasm. The catalysed reaction is guanosine(37) in tRNA + S-adenosyl-L-methionine = N(1)-methylguanosine(37) in tRNA + S-adenosyl-L-homocysteine + H(+). In terms of biological role, specifically methylates the N1 position of guanosine-37 in various cytoplasmic and mitochondrial tRNAs. Methylation is not dependent on the nature of the nucleoside 5' of the target nucleoside. This is the first step in the biosynthesis of wybutosine (yW), a modified base adjacent to the anticodon of tRNAs and required for accurate decoding. This is tRNA (guanine(37)-N(1))-methyltransferase 2 from Phaeodactylum tricornutum (strain CCAP 1055/1).